The following is a 309-amino-acid chain: Calcium homeostasis modulator protein 5 (309 aa).

Over 1–15 the chain is Cytoplasmic; that stretch reads MDAFQSILKFFLNQK. Residues 16-37 traverse the membrane as a helical segment; that stretch reads TAIGYSFMALLTVGSERLFSLV. Arg32 and Val37 together coordinate a 1,2-diacyl-sn-glycero-3-phosphate. The Extracellular portion of the chain corresponds to 38-45; sequence AFKCPCSV. Cystine bridges form between Cys41/Cys127, Cys43/Cys158, and Cys142/Cys149. A helical membrane pass occupies residues 46 to 70; sequence ENTAYGLVFLFAPAWVLLILGFFLN. The Cytoplasmic segment spans residues 71–99; the sequence is NKAWRLFTGCCMNPKKIFPRRRCCRFFYV. Residues 100–129 traverse the membrane as a helical segment; the sequence is LGHIILSSLVAPVMWLSVALLNGTFYECAM. An a 1,2-diacyl-sn-glycero-3-phosphate-binding site is contributed by Asn121. The Extracellular portion of the chain corresponds to 130–174; the sequence is SGTRSTRLLEMICKGKPKECWEELHKVSCGKSSMAAMESEEVRLS. Residues 175 to 200 traverse the membrane as a helical segment; it reads LQAQSQILGWCLICSASFLSLLTTCY. Residues 201–309 are Cytoplasmic-facing; that stretch reads ARCRSKVSYL…MILVGTAQSL (109 aa). Arg202 is an a 1,2-diacyl-sn-glycero-3-phosphate binding site.

It belongs to the CALHM family. In terms of assembly, oligomerizes to form undecameric cone-shaped channels.

The protein resides in the membrane. Its function is as follows. May assemble to form large pore channels with gating and ion conductance likely regulated by membrane lipids. This chain is Calcium homeostasis modulator protein 5, found in Mus musculus (Mouse).